A 505-amino-acid chain; its full sequence is Deoxyguanosinetriphosphate triphosphohydrolase (505 aa).

Positions 66–273 (RLTHSMEVQQ…MEAADDISYC (208 aa)) constitute an HD domain.

Belongs to the dGTPase family. Type 1 subfamily. In terms of assembly, homotetramer. Requires Mg(2+) as cofactor.

It catalyses the reaction dGTP + H2O = 2'-deoxyguanosine + triphosphate + H(+). In terms of biological role, dGTPase preferentially hydrolyzes dGTP over the other canonical NTPs. This Salmonella choleraesuis (strain SC-B67) protein is Deoxyguanosinetriphosphate triphosphohydrolase.